The primary structure comprises 199 residues: uncharacterized protein (199 aa).

The chain crosses the membrane as a helical span at residues 21–38 (ISPSATNFIVSLVIMILI).

Its subcellular location is the membrane. This is an uncharacterized protein from Saccharomyces cerevisiae (strain ATCC 204508 / S288c) (Baker's yeast).